The following is a 181-amino-acid chain: ATP-dependent protease subunit HslV (181 aa).

The active site involves Thr-7. Na(+) contacts are provided by Ala-166, Cys-169, and Thr-172.

It belongs to the peptidase T1B family. HslV subfamily. As to quaternary structure, a double ring-shaped homohexamer of HslV is capped on each side by a ring-shaped HslU homohexamer. The assembly of the HslU/HslV complex is dependent on binding of ATP.

Its subcellular location is the cytoplasm. The enzyme catalyses ATP-dependent cleavage of peptide bonds with broad specificity.. Its activity is regulated as follows. Allosterically activated by HslU binding. Protease subunit of a proteasome-like degradation complex believed to be a general protein degrading machinery. The polypeptide is ATP-dependent protease subunit HslV (Anaeromyxobacter dehalogenans (strain 2CP-1 / ATCC BAA-258)).